The chain runs to 43 residues: Bacteriocin leucocin-C (43 aa).

Cys9 and Cys14 are disulfide-bonded.

It is found in the secreted. Functionally, inhibits a wide spectrum of lactic acid bacteria. The sequence is that of Bacteriocin leucocin-C from Leuconostoc mesenteroides.